The following is a 422-amino-acid chain: Putative polyketide beta-ketoacyl synthase 1 (422 aa).

The Ketosynthase family 3 (KS3) domain occupies 2 to 416; sequence SRRVVVTGIG…GFQSAVVLTG (415 aa). Active-site for beta-ketoacyl synthase activity residues include Cys169, His309, and His346.

It belongs to the thiolase-like superfamily. Beta-ketoacyl-ACP synthases family.

In terms of biological role, involved in developmentally regulated synthesis of a compound biosynthetically related to polyketide antibiotics which is essential for spore color in Streptomyces halstedii. This is Putative polyketide beta-ketoacyl synthase 1 (sch1) from Streptomyces halstedii.